The chain runs to 719 residues: Leucine-rich repeat and fibronectin type-III domain-containing protein 5 (719 aa).

An N-terminal signal peptide occupies residues 1 to 17 (MEKFLFYLFLIGIAVRA). The 34-residue stretch at 18–51 (QICPKRCVCQILSPNLATLCAKKGLLFVPPNIDR) folds into the LRRNT domain. At 18–529 (QICPKRCVCQ…MQSQFLGGTM (512 aa)) the chain is on the extracellular side. LRR repeat units lie at residues 52–73 (RTVE…DFAN), 76–97 (SLVD…AFAD), 100–121 (NLRA…MFSG), 124–145 (NLHH…AFDD), 148–169 (ALEE…AVEK), 172–193 (SLHT…TFSH), and 196–217 (KMTR…PLFQ). N-linked (GlcNAc...) asparagine glycosylation occurs at asparagine 73. The LRRCT domain occupies 240–286 (NPLHCNCELLWLRRLSREDDLETCASPALLTGRYFWSIPEEEFLCEP). Residues 287-373 (PLITRHTHEM…GEATQTVDLH (87 aa)) form the Ig-like domain. Residues cysteine 308 and cysteine 357 are joined by a disulfide bond. Asparagine 330, asparagine 339, asparagine 382, asparagine 406, and asparagine 452 each carry an N-linked (GlcNAc...) asparagine glycan. Residues 385 to 416 (NHIHEPDPGSSDISTSTKSGSNASSSNGDTKM) form a disordered region. The segment covering 393 to 412 (GSSDISTSTKSGSNASSSNG) has biased composition (low complexity). One can recognise a Fibronectin type-III domain in the interval 414 to 503 (TKMSQDKIVV…ITSLTATRVV (90 aa)). A helical membrane pass occupies residues 530-550 (IIIIGGIIVASVLVFIIILMI). Topologically, residues 551-719 (RYKVCNNNGQ…VQETQRLESI (169 aa)) are cytoplasmic. The segment covering 614–627 (SETCSSQDSSTTTS) has biased composition (low complexity). Residues 614–719 (SETCSSQDSS…VQETQRLESI (106 aa)) are disordered. 3 stretches are compositionally biased toward polar residues: residues 628–641 (ALPP…PVSQ), 654–677 (EPQS…TALQ), and 702–713 (LLTNVDQNVQET).

The protein belongs to the LRFN family. As to quaternary structure, can form heteromeric complexes with LRFN1, LRFN2, LRFN3 and LFRN4. Able to form homomeric complexes across cell junctions, between adjacent cells. Does not interact with DLG1, DLG2 or DLG3. Does not interact with DLG4. In terms of processing, glycosylated. Predominantly expressed in the brain, with a weak, but broad expression in the cerebral cortex and diencephalic nuclei. Strongly expressed in both the pyramidal layer and the dentate gyrus of the hippocampus. Also detected in other parts of the central nervous system, including the olfactory bulb, pons, cerebellum, and medulla oblongata, as well as in the peripheral nervous system, such as the ganglia of cranial nerves and the dorsal root ganglion during gestation.

It is found in the membrane. Cell adhesion molecule that mediates homophilic cell-cell adhesion in a Ca(2+)-independent manner. Promotes neurite outgrowth in hippocampal neurons. In Mus musculus (Mouse), this protein is Leucine-rich repeat and fibronectin type-III domain-containing protein 5 (Lrfn5).